Here is a 543-residue protein sequence, read N- to C-terminus: Nucleoside-triphosphatase ntp-1 (543 aa).

Residues 40–60 (VYGFLLTCTCLLLILTIIPMS) traverse the membrane as a helical segment. Residue glutamate 212 is the Proton acceptor of the active site. The helical transmembrane segment at 497-517 (QISNFFSFFVILIIVLAVALY) threads the bilayer.

This sequence belongs to the GDA1/CD39 NTPase family.

It localises to the golgi apparatus membrane. The enzyme catalyses a ribonucleoside 5'-triphosphate + H2O = a ribonucleoside 5'-diphosphate + phosphate + H(+). In terms of biological role, seems to be able to hydrolyze CTP, ATP and UTP. This is Nucleoside-triphosphatase ntp-1 from Caenorhabditis elegans.